The following is a 169-amino-acid chain: Crossover junction endodeoxyribonuclease RuvC (169 aa).

Active-site residues include Asp-11, Glu-71, and Asp-143. Mg(2+) is bound by residues Asp-11, Glu-71, and Asp-143.

Belongs to the RuvC family. Homodimer which binds Holliday junction (HJ) DNA. The HJ becomes 2-fold symmetrical on binding to RuvC with unstacked arms; it has a different conformation from HJ DNA in complex with RuvA. In the full resolvosome a probable DNA-RuvA(4)-RuvB(12)-RuvC(2) complex forms which resolves the HJ. Mg(2+) serves as cofactor.

The protein localises to the cytoplasm. The enzyme catalyses Endonucleolytic cleavage at a junction such as a reciprocal single-stranded crossover between two homologous DNA duplexes (Holliday junction).. Functionally, the RuvA-RuvB-RuvC complex processes Holliday junction (HJ) DNA during genetic recombination and DNA repair. Endonuclease that resolves HJ intermediates. Cleaves cruciform DNA by making single-stranded nicks across the HJ at symmetrical positions within the homologous arms, yielding a 5'-phosphate and a 3'-hydroxyl group; requires a central core of homology in the junction. The consensus cleavage sequence is 5'-(A/T)TT(C/G)-3'. Cleavage occurs on the 3'-side of the TT dinucleotide at the point of strand exchange. HJ branch migration catalyzed by RuvA-RuvB allows RuvC to scan DNA until it finds its consensus sequence, where it cleaves and resolves the cruciform DNA. The protein is Crossover junction endodeoxyribonuclease RuvC of Allorhizobium ampelinum (strain ATCC BAA-846 / DSM 112012 / S4) (Agrobacterium vitis (strain S4)).